Reading from the N-terminus, the 424-residue chain is Dual-specificity RNA methyltransferase RlmN (424 aa).

The active-site Proton acceptor is the glutamate 132. A Radical SAM core domain is found at glycine 138–leucine 388. A disulfide bond links cysteine 145 and cysteine 391. Residues cysteine 152, cysteine 156, and cysteine 159 each coordinate [4Fe-4S] cluster. S-adenosyl-L-methionine-binding positions include glycine 217 to glutamate 218, serine 249, serine 271 to histidine 273, and asparagine 348. The active-site S-methylcysteine intermediate is the cysteine 391.

The protein belongs to the radical SAM superfamily. RlmN family. [4Fe-4S] cluster is required as a cofactor.

The protein resides in the cytoplasm. The catalysed reaction is adenosine(2503) in 23S rRNA + 2 reduced [2Fe-2S]-[ferredoxin] + 2 S-adenosyl-L-methionine = 2-methyladenosine(2503) in 23S rRNA + 5'-deoxyadenosine + L-methionine + 2 oxidized [2Fe-2S]-[ferredoxin] + S-adenosyl-L-homocysteine. The enzyme catalyses adenosine(37) in tRNA + 2 reduced [2Fe-2S]-[ferredoxin] + 2 S-adenosyl-L-methionine = 2-methyladenosine(37) in tRNA + 5'-deoxyadenosine + L-methionine + 2 oxidized [2Fe-2S]-[ferredoxin] + S-adenosyl-L-homocysteine. Functionally, specifically methylates position 2 of adenine 2503 in 23S rRNA and position 2 of adenine 37 in tRNAs. m2A2503 modification seems to play a crucial role in the proofreading step occurring at the peptidyl transferase center and thus would serve to optimize ribosomal fidelity. This is Dual-specificity RNA methyltransferase RlmN from Methylobacterium radiotolerans (strain ATCC 27329 / DSM 1819 / JCM 2831 / NBRC 15690 / NCIMB 10815 / 0-1).